The following is a 506-amino-acid chain: Aerotaxis receptor (506 aa).

The Cytoplasmic portion of the chain corresponds to 1 to 166 (MSSHPYVTQQ…PSLPLRWRAR (166 aa)). A helical membrane pass occupies residues 167–186 (GVMTLMFILLAAMLWFVAAP). The Periplasmic portion of the chain corresponds to 187–190 (VVTY). Residues 191–209 (ILCALVVLLASACFEWQIV) form a helical membrane-spanning segment. Topologically, residues 210–506 (RPIENVAHQA…RLEDAVTVLH (297 aa)) are cytoplasmic. The Methyl-accepting transducer domain occupies 263–492 (QVSSVRNGSE…ESAQVSAMVK (230 aa)).

The protein belongs to the methyl-accepting chemotaxis (MCP) protein family.

The protein localises to the cell inner membrane. Its function is as follows. Signal transducer for aerotaxis. The aerotactic response is the accumulation of cells around air bubbles. The nature of the sensory stimulus detected by this protein is the proton motive force or cellular redox state. It uses a FAD prosthetic group as a redox sensor to monitor oxygen levels. This is Aerotaxis receptor (aer) from Escherichia coli (strain K12).